Here is a 448-residue protein sequence, read N- to C-terminus: NADP-specific glutamate dehydrogenase (448 aa).

Substrate is bound by residues Lys-88, Gln-109, and Lys-112. Lys-124 acts as the Proton donor in catalysis. Residue Gly-163 participates in substrate binding. The NADP(+) site is built by Thr-207 and Asn-238. Residue Ser-381 participates in substrate binding.

This sequence belongs to the Glu/Leu/Phe/Val dehydrogenases family. As to quaternary structure, homohexamer.

The catalysed reaction is L-glutamate + NADP(+) + H2O = 2-oxoglutarate + NH4(+) + NADPH + H(+). Catalyzes the reversible oxidative deamination of glutamate to alpha-ketoglutarate and ammonia. This is NADP-specific glutamate dehydrogenase (gdhA) from Helicobacter pylori (strain J99 / ATCC 700824) (Campylobacter pylori J99).